A 466-amino-acid polypeptide reads, in one-letter code: FAD-dependent monooxygenase dpfgE (466 aa).

A signal peptide spans 1–23; the sequence is MSQKPFRVIIVGGSVTGLTLAHS. E35, G49, and R108 together coordinate FAD. N-linked (GlcNAc...) asparagine glycosylation is found at N128 and N192. FAD contacts are provided by D312 and A325. Residue N376 is glycosylated (N-linked (GlcNAc...) asparagine). Residues 443 to 465 traverse the membrane as a helical segment; sequence GVVRNVFFLLAATVIVAWVCRLW.

It belongs to the paxM FAD-dependent monooxygenase family. The cofactor is FAD.

The protein resides in the membrane. It participates in secondary metabolite biosynthesis; terpenoid biosynthesis. FAD-dependent monooxygenase; part of the gene cluster that mediates the biosynthesis of diterpenoid pyrones. The first step of the pathway is the synthesis of the alpha-pyrone moiety by the polyketide synthase dpfgA via condensation of one acetyl-CoA starter unit with 3 malonyl-CoA units and 2 methylations. The alpha-pyrone is then combined with geranylgeranyl pyrophosphate (GGPP) formed by the GGPP synthase dpfgD through the action of the prenyltransferase dpfgC to yield a linear alpha-pyrone diterpenoid. Subsequent steps in the diterpenoid pyrone biosynthetic pathway involve the decalin core formation, which is initiated by the epoxidation of the C10-C11 olefin by the FAD-dependent oxidoreductase dpfgE, and is followed by a cyclization cascade catalyzed by the terpene cyclase dpfgB. The short chain dehydrogenase/reductase dpfgG then oxidizes the 8S hydroxy group to a ketone and the short chain dehydrogenase/reductase dpfgH reduces the ketone to the 8R hydroxy group to yield higginsianin B. Higginsianin B is further methylated by the methyltransferase dpfgI to produce the intermediate named FDDP B. The cytochrome P450 monooxygenase dfgpJ then catalyzes a three-step oxidation at C-27 to generate a carboxylic acid as well as C-26 hydroxylation. Finally, methyltransferase dpfgK methylates the carboxylic acid generated by dpfgJ, yielding the final diterpenoid pyrones from the pathway which were named FDDP D and FDDP E. The chain is FAD-dependent monooxygenase dpfgE from Gibberella zeae (strain ATCC MYA-4620 / CBS 123657 / FGSC 9075 / NRRL 31084 / PH-1) (Wheat head blight fungus).